The primary structure comprises 62 residues: UPF0291 protein CLB_2550 (62 aa).

Belongs to the UPF0291 family.

Its subcellular location is the cytoplasm. The sequence is that of UPF0291 protein CLB_2550 from Clostridium botulinum (strain ATCC 19397 / Type A).